We begin with the raw amino-acid sequence, 271 residues long: Tryptophan synthase alpha chain (271 aa).

Residues Glu49 and Asp60 each act as proton acceptor in the active site.

Belongs to the TrpA family. As to quaternary structure, tetramer of two alpha and two beta chains.

The catalysed reaction is (1S,2R)-1-C-(indol-3-yl)glycerol 3-phosphate + L-serine = D-glyceraldehyde 3-phosphate + L-tryptophan + H2O. It participates in amino-acid biosynthesis; L-tryptophan biosynthesis; L-tryptophan from chorismate: step 5/5. In terms of biological role, the alpha subunit is responsible for the aldol cleavage of indoleglycerol phosphate to indole and glyceraldehyde 3-phosphate. This Nitrosococcus oceani (strain ATCC 19707 / BCRC 17464 / JCM 30415 / NCIMB 11848 / C-107) protein is Tryptophan synthase alpha chain.